The primary structure comprises 294 residues: Protease HtpX homolog 2 (294 aa).

2 helical membrane-spanning segments follow: residues 15-35 and 37-57; these read MLFT…FLSY and GTPP…QYFY. Histidine 140 is a binding site for Zn(2+). Residue glutamate 141 is part of the active site. Position 144 (histidine 144) interacts with Zn(2+). 2 helical membrane passes run 151-171 and 185-205; these read AVLT…RYSL and GGIL…FLLI. Glutamate 213 contributes to the Zn(2+) binding site.

It belongs to the peptidase M48B family. Requires Zn(2+) as cofactor.

The protein resides in the cell membrane. In Methanosarcina acetivorans (strain ATCC 35395 / DSM 2834 / JCM 12185 / C2A), this protein is Protease HtpX homolog 2.